Consider the following 338-residue polypeptide: Holliday junction branch migration complex subunit RuvB (338 aa).

Positions 1 to 180 (MERLLDNKFS…FGIIERLDYY (180 aa)) are large ATPase domain (RuvB-L). The ATP site is built by Leu19, Arg20, Gly61, Lys64, Thr65, Thr66, Arg170, Tyr180, and Arg217. Position 65 (Thr65) interacts with Mg(2+). The interval 181–251 (TVEELSQIVM…VAKSGLEMFE (71 aa)) is small ATPAse domain (RuvB-S). Residues 254 to 338 (EYGLDLVDRN…FKLKESGDNR (85 aa)) are head domain (RuvB-H). Residues Lys309 and Arg314 each contribute to the DNA site.

Belongs to the RuvB family. Homohexamer. Forms an RuvA(8)-RuvB(12)-Holliday junction (HJ) complex. HJ DNA is sandwiched between 2 RuvA tetramers; dsDNA enters through RuvA and exits via RuvB. An RuvB hexamer assembles on each DNA strand where it exits the tetramer. Each RuvB hexamer is contacted by two RuvA subunits (via domain III) on 2 adjacent RuvB subunits; this complex drives branch migration. In the full resolvosome a probable DNA-RuvA(4)-RuvB(12)-RuvC(2) complex forms which resolves the HJ.

The protein localises to the cytoplasm. It carries out the reaction ATP + H2O = ADP + phosphate + H(+). The RuvA-RuvB-RuvC complex processes Holliday junction (HJ) DNA during genetic recombination and DNA repair, while the RuvA-RuvB complex plays an important role in the rescue of blocked DNA replication forks via replication fork reversal (RFR). RuvA specifically binds to HJ cruciform DNA, conferring on it an open structure. The RuvB hexamer acts as an ATP-dependent pump, pulling dsDNA into and through the RuvAB complex. RuvB forms 2 homohexamers on either side of HJ DNA bound by 1 or 2 RuvA tetramers; 4 subunits per hexamer contact DNA at a time. Coordinated motions by a converter formed by DNA-disengaged RuvB subunits stimulates ATP hydrolysis and nucleotide exchange. Immobilization of the converter enables RuvB to convert the ATP-contained energy into a lever motion, pulling 2 nucleotides of DNA out of the RuvA tetramer per ATP hydrolyzed, thus driving DNA branch migration. The RuvB motors rotate together with the DNA substrate, which together with the progressing nucleotide cycle form the mechanistic basis for DNA recombination by continuous HJ branch migration. Branch migration allows RuvC to scan DNA until it finds its consensus sequence, where it cleaves and resolves cruciform DNA. The protein is Holliday junction branch migration complex subunit RuvB of Caldicellulosiruptor bescii (strain ATCC BAA-1888 / DSM 6725 / KCTC 15123 / Z-1320) (Anaerocellum thermophilum).